Reading from the N-terminus, the 585-residue chain is MNLFADFENRIKTALETLDLVKEKRSELSFDRIVVEPPRDASHGDAATNAAMVLAKPLGVSPRVLADLIGEKLKEDADIAEVSVAGPGFLNIRLSVAYWQRLLANVIAGGTDFGRSQTGAGRKVNVEYVSANPTGPMHVGHCRGAVVGDALANLLAFAGYGVTKEYYINDAGSQIDVLARSVFLRYREALGEAVGEIPAGLYPGDYLIPVGEALAQEYGVRLHNMPEEQWMEIVKDRAIDAMMVMIREDLAALNVHHDLFYSERQLHANGAAAIRTAINDLTFKGHVYRGTLPPPKGQLPEDWEDREQTLFRSTEVGDDIDRPLIKSDGSYTYFAADVAYFKDKYDRGFDRMIYVLGADHGGYVKRLEAVAKAVSEGKAKLTVLLCQLVKLYRDGEPVKMSKRSGDFVTLRDVVEEVGRDSVRFMMLYRKSSEPLDFDFAKVTEQSKDNPVFYVQYAHARCMSIFRQAREAFGDIDLSPDVLEAAVTGITEPSEVQLIAKLAEYPRIIEASAQSMEPHRIAFYLYDLASSFHAHWNKGKDQPELRFVNDKNRQSSLARLGLVHAVASVLQSGLAITGTDAPQEMR.

The 'HIGH' region signature appears at 131–141 (ANPTGPMHVGH).

Belongs to the class-I aminoacyl-tRNA synthetase family. Monomer.

Its subcellular location is the cytoplasm. It catalyses the reaction tRNA(Arg) + L-arginine + ATP = L-arginyl-tRNA(Arg) + AMP + diphosphate. This Allorhizobium ampelinum (strain ATCC BAA-846 / DSM 112012 / S4) (Agrobacterium vitis (strain S4)) protein is Arginine--tRNA ligase.